Consider the following 326-residue polypeptide: Tetraacyldisaccharide 4'-kinase (326 aa).

53 to 60 (SVGGNGKT) serves as a coordination point for ATP.

This sequence belongs to the LpxK family.

It carries out the reaction a lipid A disaccharide + ATP = a lipid IVA + ADP + H(+). It functions in the pathway glycolipid biosynthesis; lipid IV(A) biosynthesis; lipid IV(A) from (3R)-3-hydroxytetradecanoyl-[acyl-carrier-protein] and UDP-N-acetyl-alpha-D-glucosamine: step 6/6. Functionally, transfers the gamma-phosphate of ATP to the 4'-position of a tetraacyldisaccharide 1-phosphate intermediate (termed DS-1-P) to form tetraacyldisaccharide 1,4'-bis-phosphate (lipid IVA). The chain is Tetraacyldisaccharide 4'-kinase from Actinobacillus pleuropneumoniae serotype 5b (strain L20).